Here is a 69-residue protein sequence, read N- to C-terminus: Brevinin-1CG1 (69 aa).

An N-terminal signal peptide occupies residues 1–22; it reads MFTMKKSLLLLFFLGTINLSLC. The propeptide at 23–43 is removed in mature form; sequence EQERNAEEERRDDDEMDVEVE. Cysteine 63 and cysteine 69 are joined by a disulfide.

As to expression, expressed by the skin glands.

It is found in the secreted. Functionally, antimicrobial peptide. Active against Gram-positive bacteria R.rhodochrous X15 and B.licheniformis X39 and against Gram-negative bacterium E.coli ATCC 25922. Has antifungal activity against a slime mold isolate. Has weak hemolytic activity against human erythrocytes. This Amolops chunganensis (Chungan torrent frog) protein is Brevinin-1CG1.